A 746-amino-acid chain; its full sequence is Dystrobrevin alpha (746 aa).

The interval 1 to 288 is interaction with MAGEE1; sequence MIEDSGKRGN…SHSNQHQMKE (288 aa). The ZZ-type zinc finger occupies 238 to 294; it reads FHPVECSYCHSESMMGFRYRCQQCHNYQLCQDCFWRGHAGGSHSNQHQMKEYTSWKS. Residues C243, C246, C258, C261, C267, C270, H280, and H284 each contribute to the Zn(2+) site. The interval 397 to 447 is syntrophin-binding region; that stretch reads DRLADEHVLIGLYVNMLRNDPPCMLESSNRLDEEHRLIARYAARLAAESSS. Residues 458–557 adopt a coiled-coil conformation; the sequence is DISFTIDANK…KLLKEEELKQ (100 aa). Disordered stretches follow at residues 555-577, 646-667, and 684-721; these read LKQGTQGASSPRSSPSHTISRPI, ETESTVDSEFSRPQFEDLAPSP, and YIHGGAASTTHGDMVPEDGDPYTQPEDGNYENESVRQL. Residues 563 to 576 are compositionally biased toward low complexity; that stretch reads SSPRSSPSHTISRP. S666 is modified (phosphoserine).

It belongs to the dystrophin family. Dystrobrevin subfamily. As to quaternary structure, interacts with dystrophin, utrophin and the syntrophins SNTA1, SNTB1, SNTB2, SNTG1 and SNTG2. Binds dystrobrevin binding protein 1. Interacts with MAGEE1. Interacts with Ctnnal1. The interaction is required for correct localization of both Ctnnal1 and Dtna. Does not interact with utrophin. In terms of assembly, does not interact with syntrophin. In terms of processing, phosphorylation of isoform 2 on tyrosine kinase substrate domain present in the C-terminus. Expressed in skeletal muscle, heart, lung and brain. Sarcolemma and neuromuscular junction in skeletal muscle. Isoform 2 is restricted to the neuromuscular junction. Isoforms 5 and 6 are only expressed in muscle.

Its subcellular location is the cytoplasm. The protein localises to the synapse. It localises to the cell membrane. Its function is as follows. Involved in synapse maturation and required for normal muscle function. The sequence is that of Dystrobrevin alpha (Dtna) from Mus musculus (Mouse).